The primary structure comprises 962 residues: Putative primase C962R (962 aa).

Positions 607–775 (ELDARLWIMF…PDPNNSYEKK (169 aa)) constitute an SF3 helicase domain. 636–643 (GGGCNGKT) is an ATP binding site.

The protein belongs to the asfivirus helicase C962R family.

This is Putative primase C962R from Ornithodoros (relapsing fever ticks).